Reading from the N-terminus, the 240-residue chain is MDRYGEKQQQQQMFASYVDASLLAASGEVQGERPRARRRRRRGARCVGGGGGGGEVDGGDPKKRRLSDEQVEMLELSFREERKLETGRKVHLASELGLDPKQVAVWFQNRRARHKSKLLEEEFSKLKHAHDAAILHKCHLENEVLRLKERLVVAEEEVRRLRSAAGSHTASGEGGDIMGLGGSGACVAGSPSSSFSTGTCQPPSFGGGDHLGDDDLVYVPEYGGYADNSVVEWFSLYGLI.

A disordered region spans residues 26–64; it reads SGEVQGERPRARRRRRRGARCVGGGGGGGEVDGGDPKKR. Positions 35-44 are enriched in basic residues; that stretch reads RARRRRRRGA. Gly residues predominate over residues 46-56; the sequence is CVGGGGGGGEV. The segment at residues 59–118 is a DNA-binding region (homeobox); the sequence is GDPKKRRLSDEQVEMLELSFREERKLETGRKVHLASELGLDPKQVAVWFQNRRARHKSKL. Residues 108-167 are a coiled coil; that stretch reads QNRRARHKSKLLEEEFSKLKHAHDAAILHKCHLENEVLRLKERLVVAEEEVRRLRSAAGS.

It belongs to the HD-ZIP homeobox family. Class I subfamily. Expressed in roots, stems, leaf blades and panicles.

Its subcellular location is the nucleus. Its function is as follows. Probable transcription factor. The protein is Homeobox-leucine zipper protein HOX14 (HOX14) of Oryza sativa subsp. japonica (Rice).